A 501-amino-acid polypeptide reads, in one-letter code: Beta-secretase 1 (501 aa).

An N-terminal signal peptide occupies residues 1-21 (MAQALPWLLLWMGAGVLPAHG). Residues 22–45 (TQHGIRLPLRSGLGGAPLGLRLPR) constitute a propeptide that is removed on maturation. Topologically, residues 22–457 (TQHGIRLPLR…PQTDESTLMT (436 aa)) are extracellular. Residues 39-58 (LGLRLPRETDEEPEEPGRRG) form a disordered region. The Peptidase A1 domain occupies 75-416 (YYVEMTVGSP…DRARKRIGFA (342 aa)). Asp-93 is an active-site residue. Lys-126 carries the post-translational modification N6-acetyllysine. Residues Asn-153, Asn-172, and Asn-223 are each glycosylated (N-linked (GlcNAc...) asparagine). 3 disulfides stabilise this stretch: Cys-216-Cys-420, Cys-278-Cys-443, and Cys-330-Cys-380. 3 positions are modified to N6-acetyllysine: Lys-275, Lys-279, and Lys-285. Residue Asp-289 is part of the active site. Lys-299, Lys-300, and Lys-307 each carry N6-acetyllysine. An N-linked (GlcNAc...) asparagine glycan is attached at Asn-354. A helical membrane pass occupies residues 458–478 (IAYVMAAICALFMLPLCLMVC). 4 S-palmitoyl cysteine lipidation sites follow: Cys-474, Cys-478, Cys-482, and Cys-485. The Cytoplasmic portion of the chain corresponds to 479–501 (QWRCLRCLRQQHDDFADDISLLK). The interaction with RTN3 stretch occupies residues 479–501 (QWRCLRCLRQQHDDFADDISLLK). A DXXLL motif is present at residues 496–500 (DISLL). Residue Ser-498 is modified to Phosphoserine. Lys-501 is covalently cross-linked (Glycyl lysine isopeptide (Lys-Gly) (interchain with G-Cter in ubiquitin)).

Belongs to the peptidase A1 family. Monomer. Interacts (via DXXLL motif) with GGA1, GGA2 and GGA3 (via their VHS domain); the interaction highly increases when BACE1 is phosphorylated at Ser-498. Interacts with RTN1; RTN2; RTN3 and RTN4; the interaction leads to inhibition of amyloid precursor protein processing. Interacts with SNX6. Interacts with PCSK9. Interacts with NAT8 and NAT8B. Interacts with BIN1. Interacts (via extracellular domain) with ADAM10 (via extracellular domain). Interacts with SORL1; this interaction may affect binding with APP and hence reduce APP cleavage. Interacts with NRDC AND NRG1. In terms of processing, N-Glycosylated. Addition of a bisecting N-acetylglucosamine by MGAT3 blocks lysosomal targeting, further degradation and is required for maintaining stability under stress conditions. Post-translationally, acetylated in the endoplasmic reticulum at Lys-126, Lys-275, Lys-279, Lys-285, Lys-299, Lys-300 and Lys-307. Acetylation by NAT8 and NAT8B is transient and deacetylation probably occurs in the Golgi. Acetylation regulates the maturation, the transport to the plasma membrane, the stability and the expression of the protein. Palmitoylation mediates lipid raft localization. In terms of processing, ubiquitinated at Lys-501, ubiquitination leads to lysosomal degradation. Monoubiquitinated and 'Lys-63'-linked polyubitinated. Deubiquitnated by USP8; inhibits lysosomal degradation. Post-translationally, phosphorylation at Ser-498 is required for interaction with GGA1 and retrograded transport from endosomal compartments to the trans-Golgi network. Non-phosphorylated BACE1 enters a direct recycling route to the cell surface. In terms of tissue distribution, expressed at high levels in the brain and pancreas. In the brain, expression is highest in the substantia nigra, locus coruleus and medulla oblongata.

Its subcellular location is the cell membrane. The protein localises to the golgi apparatus. It localises to the trans-Golgi network. It is found in the endoplasmic reticulum. The protein resides in the endosome. Its subcellular location is the cell surface. The protein localises to the cytoplasmic vesicle membrane. It localises to the membrane raft. It is found in the lysosome. The protein resides in the late endosome. Its subcellular location is the early endosome. The protein localises to the recycling endosome. It localises to the cell projection. It is found in the axon. The protein resides in the dendrite. The enzyme catalyses Broad endopeptidase specificity. Cleaves Glu-Val-Asn-Leu-|-Asp-Ala-Glu-Phe in the Swedish variant of Alzheimer's amyloid precursor protein.. Its activity is regulated as follows. Inhibited by RTN3 and RTN4. In terms of biological role, responsible for the proteolytic processing of the amyloid precursor protein (APP). Cleaves at the N-terminus of the A-beta peptide sequence, between residues 671 and 672 of APP, leads to the generation and extracellular release of beta-cleaved soluble APP, and a corresponding cell-associated C-terminal fragment which is later released by gamma-secretase. Cleaves CHL1. The chain is Beta-secretase 1 from Homo sapiens (Human).